Here is a 371-residue protein sequence, read N- to C-terminus: Flagellar P-ring protein (371 aa).

Residues 1-25 form the signal peptide; it reads MTMRVCKWLLTFALLFAATLTPAHS.

Belongs to the FlgI family. The basal body constitutes a major portion of the flagellar organelle and consists of four rings (L,P,S, and M) mounted on a central rod.

Its subcellular location is the periplasm. It is found in the bacterial flagellum basal body. Its function is as follows. Assembles around the rod to form the L-ring and probably protects the motor/basal body from shearing forces during rotation. In Sinorhizobium fredii (strain NBRC 101917 / NGR234), this protein is Flagellar P-ring protein.